The sequence spans 193 residues: 3-isopropylmalate dehydratase small subunit (193 aa).

The protein belongs to the LeuD family. LeuD type 1 subfamily. Heterodimer of LeuC and LeuD.

It catalyses the reaction (2R,3S)-3-isopropylmalate = (2S)-2-isopropylmalate. It functions in the pathway amino-acid biosynthesis; L-leucine biosynthesis; L-leucine from 3-methyl-2-oxobutanoate: step 2/4. Functionally, catalyzes the isomerization between 2-isopropylmalate and 3-isopropylmalate, via the formation of 2-isopropylmaleate. This chain is 3-isopropylmalate dehydratase small subunit, found in Bacillus cereus (strain ZK / E33L).